The following is a 154-amino-acid chain: UPF0178 protein SSP2038 (154 aa).

Belongs to the UPF0178 family.

This chain is UPF0178 protein SSP2038, found in Staphylococcus saprophyticus subsp. saprophyticus (strain ATCC 15305 / DSM 20229 / NCIMB 8711 / NCTC 7292 / S-41).